The chain runs to 591 residues: V-type ATP synthase alpha chain (591 aa).

Residue 233-240 (GPFGAGKT) participates in ATP binding.

This sequence belongs to the ATPase alpha/beta chains family.

The catalysed reaction is ATP + H2O + 4 H(+)(in) = ADP + phosphate + 5 H(+)(out). In terms of biological role, produces ATP from ADP in the presence of a proton gradient across the membrane. The V-type alpha chain is a catalytic subunit. The chain is V-type ATP synthase alpha chain from Streptococcus pyogenes serotype M3 (strain ATCC BAA-595 / MGAS315).